A 171-amino-acid polypeptide reads, in one-letter code: 3-hydroxydecanoyl-[acyl-carrier-protein] dehydratase (171 aa).

The active site involves His70.

Belongs to the thioester dehydratase family. FabA subfamily. As to quaternary structure, homodimer.

It localises to the cytoplasm. It catalyses the reaction a (3R)-hydroxyacyl-[ACP] = a (2E)-enoyl-[ACP] + H2O. The enzyme catalyses (3R)-hydroxydecanoyl-[ACP] = (2E)-decenoyl-[ACP] + H2O. It carries out the reaction (2E)-decenoyl-[ACP] = (3Z)-decenoyl-[ACP]. Its pathway is lipid metabolism; fatty acid biosynthesis. Necessary for the introduction of cis unsaturation into fatty acids. Catalyzes the dehydration of (3R)-3-hydroxydecanoyl-ACP to E-(2)-decenoyl-ACP and then its isomerization to Z-(3)-decenoyl-ACP. Can catalyze the dehydratase reaction for beta-hydroxyacyl-ACPs with saturated chain lengths up to 16:0, being most active on intermediate chain length. This is 3-hydroxydecanoyl-[acyl-carrier-protein] dehydratase from Pseudomonas putida (strain W619).